The following is a 615-amino-acid chain: Sterol 3-beta-glucosyltransferase UGT80B1 (615 aa).

Residues 1–54 (MASNVFDHPLQELEGEDNGVKSEKASLLETSGSVDTTPEDSGHRSSDGHRGLDH) are disordered. Over residues 40–54 (DSGHRSSDGHRGLDH) the composition is skewed to basic and acidic residues.

It belongs to the glycosyltransferase 28 family. Expressed in developing seeds, seedlings, leaves and around the apical tip of cotyledons. In embryo, expressed in the seed coat and cotyledons.

The catalysed reaction is a sterol + UDP-alpha-D-glucose = a sterol 3-beta-D-glucoside + UDP + H(+). Functionally, involved in the biosynthesis of sterol glucosides. Catalyzes the synthesis of steryl glycosides (SGs) and acyl steryl glycosides (ASGs) which are the most abundant sterol derivatives in higher plants. Can act on several sterols like sitosterol, campesterol and stigmasterol. Is required for embryonic development, seed suberin accumulation, cutin formation and flavanoid accumulation in the seed coat. Both UGT80A2 and UGT80B1 are required for the normal production of SGs and ASGs in seeds. The chain is Sterol 3-beta-glucosyltransferase UGT80B1 from Arabidopsis thaliana (Mouse-ear cress).